Reading from the N-terminus, the 219-residue chain is uncharacterized protein (219 aa).

This sequence belongs to the CIA30 family.

Its subcellular location is the cytoplasm. The protein resides in the nucleus. This is an uncharacterized protein from Schizosaccharomyces pombe (strain 972 / ATCC 24843) (Fission yeast).